A 368-amino-acid polypeptide reads, in one-letter code: Peptide chain release factor 2 (368 aa).

Q250 carries the post-translational modification N5-methylglutamine.

Belongs to the prokaryotic/mitochondrial release factor family. Methylated by PrmC. Methylation increases the termination efficiency of RF2.

It is found in the cytoplasm. Functionally, peptide chain release factor 2 directs the termination of translation in response to the peptide chain termination codons UGA and UAA. The chain is Peptide chain release factor 2 from Rickettsia bellii (strain RML369-C).